The following is a 417-amino-acid chain: Divinyl chlorophyllide a 8-vinyl-reductase, chloroplastic (417 aa).

A chloroplast-targeting transit peptide spans 1 to 49 (MSLCSSFNVFASYSPKPKTIFKDSKFISQFQVKSSPLASTFHTNESSTS).

Highly expressed in leaves, stems and flower buds. Detected in roots.

The protein resides in the plastid. It is found in the chloroplast. The catalysed reaction is protochlorophyllide a + NADP(+) = 3,8-divinyl protochlorophyllide a + NADPH + H(+). It participates in porphyrin-containing compound metabolism; chlorophyll biosynthesis. Catalyzes the conversion of divinyl chlorophyllide to monovinyl chlorophyllide. Reduces the 8-vinyl group of the tetrapyrrole to an ethyl group using NADPH as the reductant. The best substrate is (3,8-divinyl)-chlorophyllide a (DV-Chlidea). Very low activity with (3,8-divinyl)-protochlorophyllide a (DV-Pchlidea) and (3,8-divinyl)-magnesium-protoporphyrin IX monomethyl ester (DV-MPE). No activity with (3,8-divinyl)-chlorophyllide b (DV-Chlideb), (3,8-divinyl)-magnesium-protoporphyrin IX (DV-Mg-Proto) and either (3,8-divinyl)-chlorophyll a (DV-Chla) or b (DV-Chlb). The protein is Divinyl chlorophyllide a 8-vinyl-reductase, chloroplastic (DVR) of Arabidopsis thaliana (Mouse-ear cress).